Consider the following 1610-residue polypeptide: Adenylate cyclase type 10 (1610 aa).

Guanylate cyclase domains follow at residues 42 to 179 (VLMF…RLAQ) and 293 to 418 (TIVF…ARMM). The Mg(2+) site is built by aspartate 47 and isoleucine 48. Position 47 to 52 (47 to 52 (DISGFT)) interacts with ATP. Hydrogencarbonate is bound at residue lysine 95. Aspartate 99 contacts Mg(2+). ATP contacts are provided by aspartate 99 and lysine 144. Hydrogencarbonate-binding residues include valine 167, arginine 176, and methionine 337. Residues valine 406 and 412-416 (NIAAR) contribute to the ATP site.

The protein belongs to the adenylyl cyclase class-4/guanylyl cyclase family. The cofactor is Mg(2+). Mn(2+) is required as a cofactor.

The protein resides in the cell membrane. It is found in the cytoplasm. Its subcellular location is the cytoskeleton. It localises to the perinuclear region. The protein localises to the nucleus. The protein resides in the cell projection. It is found in the cilium. It carries out the reaction ATP = 3',5'-cyclic AMP + diphosphate. Activated by manganese or magnesium ions. In the presence of magnesium ions, the enzyme is activated by bicarbonate. Calcium mildly increases the enzyme activity, also in the presence of magnesium ions. Catalyzes the formation of the signaling molecule cAMP. May function as sensor that mediates responses to changes in cellular bicarbonate and CO(2) levels. Has a critical role in mammalian spermatogenesis by producing the cAMP which regulates cAMP-responsive nuclear factors indispensable for sperm maturation in the epididymis. Induces capacitation, the maturational process that sperm undergo prior to fertilization. Involved in ciliary beat regulation. In Oryctolagus cuniculus (Rabbit), this protein is Adenylate cyclase type 10 (ADCY10).